Consider the following 489-residue polypeptide: MSFNTGTAYAESDADDEYERDIHDSSPIDATDAEASPTESDPPSNEHTPTTYGYRSSADRLPETIISEWTADECADFIATIGLEQYSTRFVENEIVGEALVALLHDDLKSMGIHSVGHRLTILRSVYDVKKAQDVPVESDHYVPLTAENEGQYATAKDIKNLVEQLRLRDERMHLFEQDFRRLAEDFRRLREDMLPALRLAKDAQQPLPHLNNGSAYAGYDTTISPPAPTPSTSGQSGGGLKRQWSTKKIMLGTTPKATSPTHLQTAHDRSLAEQTLDPSSAAERAVMSSSHLAINGLVPSATSPSYPSINIPSPTSPPNTLGGATLASRSYRSDQPTPSSRSTFAESDYAHPGGRDKQPVAPRRMQTPAPDTPSGSNASVEIFKSFRVSMDDPCYKVLPAALKKYQINAPWDQYALYIVYGDQERCLGLEEKPLILFKQLDKEGKKPMFMLRKTNNAQVDIGNEAPGSAGLGSARGAATGYDPPGGII.

The segment at 1 to 56 (MSFNTGTAYAESDADDEYERDIHDSSPIDATDAEASPTESDPPSNEHTPTTYGYRS) is disordered. Polar residues predominate over residues 37-54 (PTESDPPSNEHTPTTYGY). An SAM domain is found at 69 to 132 (WTADECADFI…LRSVYDVKKA (64 aa)). Disordered regions lie at residues 207–285 (PLPH…AAER) and 309–379 (SINI…GSNA). Polar residues-rich tracts occupy residues 256-265 (PKATSPTHLQ) and 328-346 (ASRSYRSDQPTPSSRSTFA). A Ras-associating domain is found at 377–457 (SNASVEIFKS…PMFMLRKTNN (81 aa)).

In terms of assembly, interacts with MST7 and MST11. Interacts with MCK1, MKK2 and HIK1.

In terms of biological role, mitogen-activated protein kinase adapter protein; part of the MST11-MST7-PMK1 MAP kinase (MAPK) cascade that is essential for appressorium formation, penetration and invasive growth. Binds to the MAPKKK MST11 and the MAPKK MST7 to maintain the stability of the MST11-MST7 complex for the phosphorylation of the MAPK PMK1. Is also involved in the MPS1 and OSM1 MAPK pathways, and especially plays a role in the activation of MPS1 in response to cell wall stress. Its function differs in the 3 MAPK pathways. This chain is Mitogen-activated protein kinase adapter protein MST50, found in Pyricularia oryzae (strain 70-15 / ATCC MYA-4617 / FGSC 8958) (Rice blast fungus).